An 82-amino-acid polypeptide reads, in one-letter code: Large ribosomal subunit protein bL31 (82 aa).

The Zn(2+) site is built by cysteine 16, cysteine 18, cysteine 37, and cysteine 40.

It belongs to the bacterial ribosomal protein bL31 family. Type A subfamily. In terms of assembly, part of the 50S ribosomal subunit. Zn(2+) is required as a cofactor.

Binds the 23S rRNA. This Blochmanniella pennsylvanica (strain BPEN) protein is Large ribosomal subunit protein bL31.